The sequence spans 291 residues: 4-hydroxy-tetrahydrodipicolinate synthase (291 aa).

Threonine 42 lines the pyruvate pocket. The active-site Proton donor/acceptor is tyrosine 129. Lysine 157 functions as the Schiff-base intermediate with substrate in the catalytic mechanism. Residue isoleucine 198 participates in pyruvate binding.

It belongs to the DapA family. Homotetramer; dimer of dimers.

Its subcellular location is the cytoplasm. The enzyme catalyses L-aspartate 4-semialdehyde + pyruvate = (2S,4S)-4-hydroxy-2,3,4,5-tetrahydrodipicolinate + H2O + H(+). It participates in amino-acid biosynthesis; L-lysine biosynthesis via DAP pathway; (S)-tetrahydrodipicolinate from L-aspartate: step 3/4. Functionally, catalyzes the condensation of (S)-aspartate-beta-semialdehyde [(S)-ASA] and pyruvate to 4-hydroxy-tetrahydrodipicolinate (HTPA). This is 4-hydroxy-tetrahydrodipicolinate synthase from Chlamydia pneumoniae (Chlamydophila pneumoniae).